The chain runs to 206 residues: FMN-dependent NADH:quinone oxidoreductase 2 (206 aa).

Serine 10 contacts FMN.

Belongs to the azoreductase type 1 family. In terms of assembly, homodimer. FMN serves as cofactor.

It carries out the reaction 2 a quinone + NADH + H(+) = 2 a 1,4-benzosemiquinone + NAD(+). The catalysed reaction is N,N-dimethyl-1,4-phenylenediamine + anthranilate + 2 NAD(+) = 2-(4-dimethylaminophenyl)diazenylbenzoate + 2 NADH + 2 H(+). Quinone reductase that provides resistance to thiol-specific stress caused by electrophilic quinones. In terms of biological role, also exhibits azoreductase activity. Catalyzes the reductive cleavage of the azo bond in aromatic azo compounds to the corresponding amines. This chain is FMN-dependent NADH:quinone oxidoreductase 2, found in Rhizobium etli (strain ATCC 51251 / DSM 11541 / JCM 21823 / NBRC 15573 / CFN 42).